We begin with the raw amino-acid sequence, 422 residues long: G2/mitotic-specific cyclin-A (422 aa).

Positions 1–29 (MSQPFALHHDGENQMQRRGKMNTRSNGLS) are disordered.

The protein belongs to the cyclin family. Cyclin AB subfamily.

Essential for the control of the cell cycle at the G2/M (mitosis) transition. Interacts with the CDC2 and CDK2 protein kinases to form MPF. G2/M cyclins accumulate steadily during G2 and are abruptly destroyed at mitosis. The protein is G2/mitotic-specific cyclin-A of Spisula solidissima (Atlantic surf-clam).